The sequence spans 305 residues: Putative cuticle collagen 90 (305 aa).

Disordered stretches follow at residues 95 to 117 (AGPPGPPGLPGKRGDEGVVGDLG) and 146 to 305 (PPGQ…AKRH). Triple-helical region stretches follow at residues 96-125 (GPPGPPGLPGKRGDEGVVGDLGRSGASGIS), 142-204 (GPAG…PGTA), 208-252 (GAVG…NGRD), and 256-270 (GQPGKAGEPGAVGKD). The segment covering 150-162 (QGPVGPQGFPGVV) has biased composition (low complexity). Positions 278–288 (ARRDSKTESVH) are enriched in basic and acidic residues.

This sequence belongs to the cuticular collagen family. Collagen polypeptide chains are complexed within the cuticle by disulfide bonds and other types of covalent cross-links.

Nematode cuticles are composed largely of collagen-like proteins. The cuticle functions both as an exoskeleton and as a barrier to protect the worm from its environment. The protein is Putative cuticle collagen 90 (col-90) of Caenorhabditis elegans.